The following is an 882-amino-acid chain: Alanine--tRNA ligase (882 aa).

Histidine 574, histidine 578, cysteine 682, and histidine 686 together coordinate Zn(2+). Residues glycine 853–proline 882 are disordered. Gly residues predominate over residues glycine 854–leucine 868.

This sequence belongs to the class-II aminoacyl-tRNA synthetase family. Requires Zn(2+) as cofactor.

The protein resides in the cytoplasm. The enzyme catalyses tRNA(Ala) + L-alanine + ATP = L-alanyl-tRNA(Ala) + AMP + diphosphate. Its function is as follows. Catalyzes the attachment of alanine to tRNA(Ala) in a two-step reaction: alanine is first activated by ATP to form Ala-AMP and then transferred to the acceptor end of tRNA(Ala). Also edits incorrectly charged Ser-tRNA(Ala) and Gly-tRNA(Ala) via its editing domain. This Thermus thermophilus (strain ATCC 27634 / DSM 579 / HB8) protein is Alanine--tRNA ligase.